Consider the following 888-residue polypeptide: Extra-large guanine nucleotide-binding protein 1 (888 aa).

The interval 98–119 is disordered; sequence SVIEHTEEEEEEEGGDGEDCEL. Over residues 103–118 the composition is skewed to acidic residues; the sequence is TEEEEEEEGGDGEDCE. The Nuclear localization signal signature appears at 205 to 222; sequence RRVRVVPVKKQPQTKGKK. An RING-type; degenerate zinc finger spans residues 225 to 268; the sequence is CYRCFKGSRFTEKEVCLVCDAKYCNSCVLRAMGSMPEGRKCVTC. Residues 482 to 879 enclose the G-alpha domain; that stretch reads TLQKILLVGN…NICMSEYSMY (398 aa). Residues 485–498 form a G1 motif region; sequence KILLVGNSGSGTST. GTP-binding positions include 490–498 and 661–669; these read GNSGSGTST and DILYAEGVT. Positions 497 and 669 each coordinate Ca(2+). A G2 motif region spans residues 661–669; sequence DILYAEGVT. The tract at residues 702 to 711 is G3 motif; the sequence is YQLIRVPSRG. The tract at residues 770–777 is G4 motif; that stretch reads LLILNKYD. Position 774–777 (774–777) interacts with GTP; it reads NKYD. Residues 843–848 are G5 motif; sequence SKSLDP.

It belongs to the G-alpha family. XLG subfamily. Requires Ca(2+) as cofactor. In terms of tissue distribution, ubiquitous. Strongly expressed in vascular tissues, root and shoot meristems and lateral root primordia.

The protein localises to the nucleus. In terms of biological role, guanine nucleotide-binding proteins (G proteins) are involved as modulators or transducers in various transmembrane signaling systems. Binds GTP with specificity. Plays a role in the root morphogenesis by regulation of the cell proliferation. The protein is Extra-large guanine nucleotide-binding protein 1 (XLG1) of Arabidopsis thaliana (Mouse-ear cress).